A 393-amino-acid chain; its full sequence is Phospho-N-acetylmuramoyl-pentapeptide-transferase (393 aa).

10 helical membrane passes run 29-49, 75-95, 101-121, 138-158, 194-214, 226-246, 263-283, 290-310, 315-335, and 370-390; these read RAVM…PWVI, TPTM…LLWF, FVWV…VDDW, YLWQ…SVSE, VSYP…IVGA, GLAI…AYVT, AGEL…FLWF, VFMG…IAVI, IVLG…MAQV, and QVVV…LSTL.

Belongs to the glycosyltransferase 4 family. MraY subfamily. It depends on Mg(2+) as a cofactor.

The protein resides in the cell inner membrane. The enzyme catalyses UDP-N-acetyl-alpha-D-muramoyl-L-alanyl-gamma-D-glutamyl-meso-2,6-diaminopimeloyl-D-alanyl-D-alanine + di-trans,octa-cis-undecaprenyl phosphate = di-trans,octa-cis-undecaprenyl diphospho-N-acetyl-alpha-D-muramoyl-L-alanyl-D-glutamyl-meso-2,6-diaminopimeloyl-D-alanyl-D-alanine + UMP. Its pathway is cell wall biogenesis; peptidoglycan biosynthesis. Its function is as follows. Catalyzes the initial step of the lipid cycle reactions in the biosynthesis of the cell wall peptidoglycan: transfers peptidoglycan precursor phospho-MurNAc-pentapeptide from UDP-MurNAc-pentapeptide onto the lipid carrier undecaprenyl phosphate, yielding undecaprenyl-pyrophosphoryl-MurNAc-pentapeptide, known as lipid I. The polypeptide is Phospho-N-acetylmuramoyl-pentapeptide-transferase (Leptothrix cholodnii (strain ATCC 51168 / LMG 8142 / SP-6) (Leptothrix discophora (strain SP-6))).